Reading from the N-terminus, the 576-residue chain is Arginine--tRNA ligase (576 aa).

A 'HIGH' region motif is present at residues 126-136; the sequence is ANPTGPMHIGH.

This sequence belongs to the class-I aminoacyl-tRNA synthetase family. As to quaternary structure, monomer.

It is found in the cytoplasm. It carries out the reaction tRNA(Arg) + L-arginine + ATP = L-arginyl-tRNA(Arg) + AMP + diphosphate. In Rickettsia rickettsii (strain Iowa), this protein is Arginine--tRNA ligase.